The sequence spans 236 residues: Phosphoribosylaminoimidazole-succinocarboxamide synthase (236 aa).

This sequence belongs to the SAICAR synthetase family.

It catalyses the reaction 5-amino-1-(5-phospho-D-ribosyl)imidazole-4-carboxylate + L-aspartate + ATP = (2S)-2-[5-amino-1-(5-phospho-beta-D-ribosyl)imidazole-4-carboxamido]succinate + ADP + phosphate + 2 H(+). It functions in the pathway purine metabolism; IMP biosynthesis via de novo pathway; 5-amino-1-(5-phospho-D-ribosyl)imidazole-4-carboxamide from 5-amino-1-(5-phospho-D-ribosyl)imidazole-4-carboxylate: step 1/2. The protein is Phosphoribosylaminoimidazole-succinocarboxamide synthase of Coprothermobacter proteolyticus (strain ATCC 35245 / DSM 5265 / OCM 4 / BT).